The primary structure comprises 1208 residues: Neural cell adhesion molecule L1-like protein (1208 aa).

An N-terminal signal peptide occupies residues 1-24 (MEPLLLGRGLIVYLMFLLLKFSKA). The Extracellular portion of the chain corresponds to 25 to 1082 (IEIPSSVQQV…LYDDISTQGW (1058 aa)). Ig-like C2-type domains follow at residues 35–124 (PTII…EEIE) and 128–223 (PSVP…MKLT). Disulfide bonds link C57-C109 and C153-C204. 2 N-linked (GlcNAc...) asparagine glycosylation sites follow: K231 and N299. Ig-like C2-type domains lie at 235–328 (PKLL…VIVE), 331–417 (PRWT…ANID), 423–510 (PLIQ…ANLD), and 515–607 (TKLR…TQVT). Intrachain disulfides connect C262–C310, C352–C401, C445–C494, and C536–C591. Residues N476 and N482 are each glycosylated (N-linked (GlcNAc...) asparagine). Residues 555-558 (DGEA) carry the DGEA motif. N-linked (GlcNAc...) asparagine glycosylation is found at N562 and N580. 4 consecutive Fibronectin type-III domains span residues 614 to 709 (PPEN…TPPA), 714 to 807 (NPQN…SGED), 809 to 914 (PDTA…TPEG), and 918 to 1015 (QPTF…LGEG). Residues 693–716 (GRSQPSQPSDHHETPPAAPDRNPQ) form a disordered region. N-linked (GlcNAc...) asparagine glycans are attached at residues N767, N822, N945, and N1026. The helical transmembrane segment at 1083-1103 (FIGLMCAIALLTLLLLTVCFV) threads the bilayer. The Cytoplasmic segment spans residues 1104–1208 (KRNRGGKYSV…SSTATFPLRA (105 aa)). Residues 1131–1163 (ETFGEYSDSDEKPLKGSLRSLNRDMQPTESADS) form a disordered region. Residues S1147, S1160, and S1180 each carry the phosphoserine modification. Over residues 1149-1161 (RSLNRDMQPTESA) the composition is skewed to polar residues. Positions 1181–1185 (FIGAY) match the FIG[AQ]Y motif. The segment at 1189 to 1208 (KEKGSVESNGSSTATFPLRA) is disordered. Residues 1194–1208 (VESNGSSTATFPLRA) show a composition bias toward polar residues.

Belongs to the immunoglobulin superfamily. L1/neurofascin/NgCAM family. As to quaternary structure, may interact with L1CAM. May interact with ITGB1/ITGA1 heterodimer and ITGB1/ITGA2 heterodimer as well as with ANK3. Cleavage by metalloprotease ADAM8 in the extracellular part generates 2 soluble forms (125 kDa and 165 kDa) in vitro and is inhibited by metalloprotease inhibitors. Cleaved by BACE1. Post-translationally, N-glycosylated. Contains N-linked oligosaccharides with a sulfated carbohydrate structure type HNK-1 (SO4-3-GlcUABeta1,3GalBeta1,4GlcNAc). In terms of processing, O-glycosylated. In terms of tissue distribution, expressed in the fetal and adult brain as well as in Schwann cell culture. Also detected in adult peripheral tissues.

It localises to the cell membrane. It is found in the secreted. The protein localises to the extracellular space. Its subcellular location is the extracellular matrix. In terms of biological role, extracellular matrix and cell adhesion protein that plays a role in nervous system development and in synaptic plasticity. Both soluble and membranous forms promote neurite outgrowth of cerebellar and hippocampal neurons and suppress neuronal cell death. Plays a role in neuronal positioning of pyramidal neurons and in regulation of both the number of interneurons and the efficacy of GABAergic synapses. May play a role in regulating cell migration in nerve regeneration and cortical development. Potentiates integrin-dependent cell migration towards extracellular matrix proteins. Recruits ANK3 to the plasma membrane. The sequence is that of Neural cell adhesion molecule L1-like protein (CHL1) from Homo sapiens (Human).